Here is a 363-residue protein sequence, read N- to C-terminus: N-acetylmuramate/N-acetylglucosamine kinase (363 aa).

Belongs to the kinase AmgK family.

It catalyses the reaction N-acetyl-D-muramate + ATP = N-acetyl-alpha-D-muramate 1-phosphate + ADP + H(+). The catalysed reaction is N-acetyl-D-glucosamine + ATP = N-acetyl-alpha-D-glucosamine 1-phosphate + ADP + H(+). The protein operates within cell wall biogenesis; peptidoglycan recycling. Its function is as follows. Sugar kinase that catalyzes the ATP-dependent phosphorylation of N-acetylmuramate (MurNAc) and N-acetylglucosamine (GlcNAc) at its C1 hydroxyl group, leading to MurNAc alpha-1P and GlcNAc alpha-1P, respectively. Is likely involved in peptidoglycan recycling as part of a cell wall recycling pathway that bypasses de novo biosynthesis of the peptidoglycan precursor UDP-MurNAc. Is able to complement the fosfomycin sensitivity phenotype of a P.putida mutant lacking amgK. This Caulobacter vibrioides (strain ATCC 19089 / CIP 103742 / CB 15) (Caulobacter crescentus) protein is N-acetylmuramate/N-acetylglucosamine kinase.